Reading from the N-terminus, the 460-residue chain is UDP-glycosyltransferase 91C1 (460 aa).

UDP-alpha-D-glucose-binding positions include Thr283, 335 to 337 (VPQ), 352 to 360 (HCGWNSVVE), and 374 to 377 (LNEQ).

It belongs to the UDP-glycosyltransferase family.

The chain is UDP-glycosyltransferase 91C1 (UGT91C1) from Arabidopsis thaliana (Mouse-ear cress).